Here is a 102-residue protein sequence, read N- to C-terminus: Small ribosomal subunit protein uS10 (102 aa).

It belongs to the universal ribosomal protein uS10 family. In terms of assembly, part of the 30S ribosomal subunit.

Involved in the binding of tRNA to the ribosomes. This Myxococcus xanthus (strain DK1622) protein is Small ribosomal subunit protein uS10.